The primary structure comprises 254 residues: 2,3-bisphosphoglycerate-dependent phosphoglycerate mutase (254 aa).

Substrate is bound by residues 15-22, 28-29, Arg67, 94-97, Lys105, 121-122, and 188-189; these read RHGQSEWN, TG, ERHY, RR, and GN. The active-site Tele-phosphohistidine intermediate is His16. Glu94 serves as the catalytic Proton donor/acceptor.

The protein belongs to the phosphoglycerate mutase family. BPG-dependent PGAM subfamily.

The enzyme catalyses (2R)-2-phosphoglycerate = (2R)-3-phosphoglycerate. The protein operates within carbohydrate degradation; glycolysis; pyruvate from D-glyceraldehyde 3-phosphate: step 3/5. Functionally, catalyzes the interconversion of 2-phosphoglycerate and 3-phosphoglycerate. The polypeptide is 2,3-bisphosphoglycerate-dependent phosphoglycerate mutase (Corynebacterium jeikeium (strain K411)).